We begin with the raw amino-acid sequence, 213 residues long: Skin granule protein (213 aa).

An N-terminal signal peptide occupies residues 1 to 26 (METMYHRFLCIPFLLILGLAQGQSKG). A run of 3 repeats spans residues 27–48 (LQTV…IRTG), 49–70 (LQPI…IRTG), and 71–92 (LQPI…IRTG). Positions 27–104 (LQTVTTFRTG…PIATFQTGVQ (78 aa)) are 4 X 22 AA approximate tandem repeats. The stretch at 93-104 (LQPIATFQTGVQ) is one 4; truncated repeat. The tract at residues 162–213 (WHGGRNGHKMKKLGKKKHHKNRHGGKNHHKMKKIGKHHGGGRKFGKKHRHHK) is disordered. Positions 166–213 (RNGHKMKKLGKKKHHKNRHGGKNHHKMKKIGKHHGGGRKFGKKHRHHK) are enriched in basic residues.

The protein resides in the secreted. This chain is Skin granule protein (sgp), found in Xenopus laevis (African clawed frog).